The primary structure comprises 202 residues: MSKISFKGDLKEGIKIIIDPNLNWDEIRNLIVDEIKSKEGFLKGSSIYVDFQGKDIKDEDWQEFRKEIYEKYGIMLSKELYRLRISNSNNAKIVLGPIRSGKSLNVKDNLLVIGDVNSGSEIICNKNVFVLGKVRGSIWAGYENNDKATIFALELEPEKIQIARYILDLSKIKKEKTGVGYWVYVENGEVKLNRYSGGKKNG.

This sequence belongs to the MinC family. Interacts with MinD and FtsZ.

Its function is as follows. Cell division inhibitor that blocks the formation of polar Z ring septums. Rapidly oscillates between the poles of the cell to destabilize FtsZ filaments that have formed before they mature into polar Z rings. Prevents FtsZ polymerization. The sequence is that of Probable septum site-determining protein MinC from Dictyoglomus turgidum (strain DSM 6724 / Z-1310).